A 78-amino-acid polypeptide reads, in one-letter code: Lantibiotic cinnamycin (78 aa).

Positions 1–59 are excised as a propeptide; the sequence is MTASILQQSVVDADFRAALLENPAAFGASAAALPTPVEAQDQASLDFWTKDIAATEAFA. 2 consecutive cross-links (beta-methyllanthionine (Cys-Thr)) follow at residues 60-77 and 64-70; these read CRQS…DGNT and CSFGPFT. The lanthionine (Ser-Cys) cross-link spans 63-73; the sequence is SCSFGPFTFVC. The lysinoalanine (Ser-Lys) cross-link spans 65–78; it reads SFGPFTFVCDGNTK. Residue Asp-74 is modified to (3R)-3-hydroxyaspartate.

The protein belongs to the type B lantibiotic family. Maturation of lantibiotics involves the enzymatic conversion of Thr, and Ser into dehydrated AA and the formation of thioether bonds with cysteine or the formation of dialkylamine bonds with lysine. This is followed by membrane translocation and cleavage of the modified precursor.

In terms of biological role, can act as inhibitor of the enzyme phospholipase A2, and of the angiotensin-converting enzyme. Shows inhibitory activities against herpes simplex virus and immunopotentiating activities. Its antimicrobial activities are not very pronounced. In Streptomyces griseoverticillatus (Streptoverticillium griseoverticillatum), this protein is Lantibiotic cinnamycin (cinA).